Here is a 409-residue protein sequence, read N- to C-terminus: Phosphatidylglycerol--prolipoprotein diacylglyceryl transferase (409 aa).

Helical transmembrane passes span 18-38 (PVPL…AVFV), 48-68 (MDPM…IVGA), 93-113 (IWNG…GAWL), and 119-139 (GISL…AQAI). R141 provides a ligand contact to a 1,2-diacyl-sn-glycero-3-phospho-(1'-sn-glycerol). 2 consecutive transmembrane segments (helical) span residues 177-197 (QPTF…LLVV) and 234-254 (ILGL…ALLA). The tract at residues 273-409 (ALGIARSRPA…AVPPEEPQLP (137 aa)) is disordered. Composition is skewed to low complexity over residues 297-309 (AAAP…DSAA), 320-335 (PDLG…SAGS), and 348-375 (TATT…TATT).

It belongs to the Lgt family.

Its subcellular location is the cell membrane. It catalyses the reaction L-cysteinyl-[prolipoprotein] + a 1,2-diacyl-sn-glycero-3-phospho-(1'-sn-glycerol) = an S-1,2-diacyl-sn-glyceryl-L-cysteinyl-[prolipoprotein] + sn-glycerol 1-phosphate + H(+). The protein operates within protein modification; lipoprotein biosynthesis (diacylglyceryl transfer). Functionally, catalyzes the transfer of the diacylglyceryl group from phosphatidylglycerol to the sulfhydryl group of the N-terminal cysteine of a prolipoprotein, the first step in the formation of mature lipoproteins. The sequence is that of Phosphatidylglycerol--prolipoprotein diacylglyceryl transferase from Frankia casuarinae (strain DSM 45818 / CECT 9043 / HFP020203 / CcI3).